Consider the following 580-residue polypeptide: Glutamine--tRNA ligase (580 aa).

The 'HIGH' region motif lies at 41–51 (PEPNGYLHIGH). ATP is bound by residues 42–44 (EPN) and 48–54 (HIGHAKA). Residues aspartate 74 and tyrosine 218 each contribute to the L-glutamine site. ATP is bound by residues threonine 237, 285–286 (RL), and 293–295 (MSK). A 'KMSKS' region motif is present at residues 292-296 (VMSKR).

This sequence belongs to the class-I aminoacyl-tRNA synthetase family. As to quaternary structure, monomer.

It localises to the cytoplasm. The catalysed reaction is tRNA(Gln) + L-glutamine + ATP = L-glutaminyl-tRNA(Gln) + AMP + diphosphate. This is Glutamine--tRNA ligase from Xylella fastidiosa (strain Temecula1 / ATCC 700964).